Consider the following 380-residue polypeptide: GDP-mannose:cellobiosyl-diphosphopolyprenol alpha-mannosyltransferase (380 aa).

This sequence belongs to the glycosyltransferase group 1 family. Glycosyltransferase 4 subfamily.

It catalyses the reaction beta-D-Glc-(1-&gt;4)-alpha-D-Glc-di-trans,octa-cis-undecaprenyl diphosphate + GDP-alpha-D-mannose = alpha-D-Man-(1-&gt;3)-beta-D-Glc-(1-&gt;4)-alpha-D-Glc-1-di-trans,octa-cis-undecaprenyl diphosphate + GDP + H(+). Functionally, involved in the biosynthesis of the exopolysaccharide xanthan, a polymer that is comprised of repeating pentasaccharide units with the structure of a beta-(1,4)-linked D-glucose backbone with trisaccharide side chains composed of mannose-beta-(1,4)-glucuronic acid-beta-(1,2)-mannose attached to alternate glucose residues in the backbone by alpha-(1,3) linkages. Xanthan is involved in pathogenicity but has also been used in a variety of applications as a specialty polymer for commercial applications, including food additives, where they act as viscosifying, stabilizing, emulsifying, or gelling agents. The protein is GDP-mannose:cellobiosyl-diphosphopolyprenol alpha-mannosyltransferase (gumH) of Xanthomonas campestris.